The sequence spans 312 residues: Olfactory receptor 51B2 (312 aa).

The Extracellular segment spans residues 1–23 (MWPNITAAPFLLTGFPGLEAAHH). An N-linked (GlcNAc...) asparagine glycan is attached at Asn4. A helical transmembrane segment spans residues 24 to 44 (WISIPFFAVYVCILLGNGMLL). The Cytoplasmic portion of the chain corresponds to 45-52 (YLIKHDHS). The chain crosses the membrane as a helical span at residues 53–73 (LHEPMYYFLTMLAGTDLMVTL). At 74 to 97 (TTMPTVMGILWVNHREISSVGCFL) the chain is on the extracellular side. Cys95 and Cys187 are oxidised to a cystine. A helical transmembrane segment spans residues 98-118 (QAYFIHSLSVVESGSLLAMAY). Topologically, residues 119 to 137 (DCFIAIRNPLRYASILTNT) are cytoplasmic. The chain crosses the membrane as a helical span at residues 138-158 (RVIALGVGVFLRGFVSILPVI). Residues 159–194 (LRLFSFSYCKSHVITRAFCLHQEIMRLACADITFNR) are Extracellular-facing. A helical membrane pass occupies residues 195 to 215 (LYPVILISLTIFLDCLIILFS). The Cytoplasmic portion of the chain corresponds to 216–235 (YILILNTVIGIASGEERAKA). Residues 236-256 (LNTCISHISCVLIFYVTVMGL) form a helical membrane-spanning segment. Topologically, residues 257–271 (TFIYRFGKNVPEVVH) are extracellular. Residues 272–292 (IIMSYIYFLFPPLMNPVIYSI) form a helical membrane-spanning segment. Over 293–312 (KTKQIQYGIIRLLSKHRFSS) the chain is Cytoplasmic.

It belongs to the G-protein coupled receptor 1 family. Ubiquitinated by the CRL2(FEM1A) and CRL2(FEM1C) complexes, which recognize the -Lys-Xaa-Xaa-Arg C-degron at the C-terminus, leading to its degradation.

It is found in the cell membrane. Functionally, odorant receptor. In Homo sapiens (Human), this protein is Olfactory receptor 51B2 (OR51B2).